Consider the following 124-residue polypeptide: ATP synthase epsilon chain (124 aa).

The protein belongs to the ATPase epsilon chain family. In terms of assembly, F-type ATPases have 2 components, CF(1) - the catalytic core - and CF(0) - the membrane proton channel. CF(1) has five subunits: alpha(3), beta(3), gamma(1), delta(1), epsilon(1). CF(0) has three main subunits: a, b and c.

The protein localises to the cell membrane. Functionally, produces ATP from ADP in the presence of a proton gradient across the membrane. This Corynebacterium glutamicum (strain ATCC 13032 / DSM 20300 / JCM 1318 / BCRC 11384 / CCUG 27702 / LMG 3730 / NBRC 12168 / NCIMB 10025 / NRRL B-2784 / 534) protein is ATP synthase epsilon chain.